The following is a 57-amino-acid chain: UPF0391 membrane protein Smed_4051 (57 aa).

2 consecutive transmembrane segments (helical) span residues 4–24 (WALI…SGIS) and 33–53 (ILFY…LAVG).

This sequence belongs to the UPF0391 family.

Its subcellular location is the cell membrane. This is UPF0391 membrane protein Smed_4051 from Sinorhizobium medicae (strain WSM419) (Ensifer medicae).